Reading from the N-terminus, the 110-residue chain is Thiosulfate sulfurtransferase GlpE (110 aa).

Residues 19 to 107 (EDSLAVLVDI…WRRQALPIIQ (89 aa)) form the Rhodanese domain. Cys67 functions as the Cysteine persulfide intermediate in the catalytic mechanism.

Belongs to the GlpE family.

Its subcellular location is the cytoplasm. It carries out the reaction thiosulfate + hydrogen cyanide = thiocyanate + sulfite + 2 H(+). It catalyses the reaction thiosulfate + [thioredoxin]-dithiol = [thioredoxin]-disulfide + hydrogen sulfide + sulfite + 2 H(+). Transferase that catalyzes the transfer of sulfur from thiosulfate to thiophilic acceptors such as cyanide or dithiols. May function in a CysM-independent thiosulfate assimilation pathway by catalyzing the conversion of thiosulfate to sulfite, which can then be used for L-cysteine biosynthesis. This is Thiosulfate sulfurtransferase GlpE from Photobacterium profundum (strain SS9).